The sequence spans 595 residues: Inactive glycosyltransferase 25 family member 3 (595 aa).

Residues 1–22 form the signal peptide; it reads MRAARAAPLLQLLLLLGPWLEA. Asparagine 75, asparagine 153, asparagine 237, and asparagine 360 each carry an N-linked (GlcNAc...) asparagine glycan. The interval 548 to 595 is disordered; the sequence is DTETSSPWDDDSGRLISWSGSQKTLRSPRLDLTGSSGHSLQPQPRDEL. Positions 580 to 589 are enriched in polar residues; that stretch reads TGSSGHSLQP. A Prevents secretion from ER motif is present at residues 592-595; the sequence is RDEL.

It belongs to the glycosyltransferase 25 family. Ubiquitous. Highly expressed in secretory and nervous tissues.

The protein resides in the endoplasmic reticulum lumen. Its function is as follows. Probable cell adhesion protein involved in leukocyte transmigration across the blood-brain barrier. Does not express any beta-galactosyltransferase activity in vitro. The sequence is that of Inactive glycosyltransferase 25 family member 3 (CERCAM) from Homo sapiens (Human).